The sequence spans 90 residues: Conotoxin Vc22.1 (90 aa).

Residues 1-18 (MMTRVFLAMFFLLVLTKG) form the signal peptide.

It belongs to the E superfamily. Contains 4 disulfide bonds. Expressed by the venom duct.

It localises to the secreted. The polypeptide is Conotoxin Vc22.1 (Conus victoriae (Queen Victoria cone)).